The sequence spans 630 residues: Replication protein A 70 kDa DNA-binding subunit B (630 aa).

The OB DNA-binding region spans 200-282 (IIKVRVTSKG…KTVHNDYEMT (83 aa)). The C4-type zinc-finger motif lies at 496–516 (CKTCNKKVTEAIGSGYWCEGC).

The protein belongs to the replication factor A protein 1 family. Heterotrimer of RPA1, RPA2 and RPA3 (canonical replication protein A complex). Interacts with RPA2A. As to expression, expressed in root tips, roots, shoot apical meristem (SAM) and young leaves, and at lower levels in mature leaves, flag leaves and ears.

Its subcellular location is the nucleus. Component of the replication protein A complex (RPA) required for DNA recombination, repair and replication. The activity of RPA is mediated by single-stranded DNA binding and protein interactions. Probably involved in repair of double-strand DNA breaks (DSBs) induced by genotoxic stresses. The protein is Replication protein A 70 kDa DNA-binding subunit B (RPA1B) of Oryza sativa subsp. japonica (Rice).